We begin with the raw amino-acid sequence, 635 residues long: Probable potassium transport system protein Kup (635 aa).

12 consecutive transmembrane segments (helical) span residues 20 to 40, 62 to 82, 111 to 131, 149 to 169, 180 to 200, 223 to 243, 259 to 279, 292 to 312, 349 to 369, 377 to 397, 408 to 428, and 429 to 449; these read MALV…SPLY, VLSL…VTII, AYVV…DGVI, PSLH…VFMV, VFGP…IWNI, GWHG…GEAL, WYFF…ALVL, AVPS…AVIA, IYVP…VLIF, VAYG…LALV, WVLP…IANG, and AKLL…FTLM.

Belongs to the HAK/KUP transporter (TC 2.A.72) family.

It localises to the cell inner membrane. The enzyme catalyses K(+)(in) + H(+)(in) = K(+)(out) + H(+)(out). Transport of potassium into the cell. Likely operates as a K(+):H(+) symporter. The chain is Probable potassium transport system protein Kup from Xanthomonas campestris pv. campestris (strain 8004).